The following is a 345-amino-acid chain: Baculoviral IAP repeat-containing protein 7-B (345 aa).

BIR repeat units lie at residues R46–Q112 and R154–L219. 4 residues coordinate Zn(2+): C188, C191, H208, and C215. Residue S237 is modified to Phosphoserine. S241 carries the post-translational modification Phosphoserine; by MAPK1. S253 bears the Phosphoserine mark. At S257 the chain carries Phosphoserine; by MAPK1. Residues T258–E286 are disordered. Residues C298–R333 form an RING-type zinc finger.

The protein belongs to the IAP family. Auto-ubiquitinated, and degraded in a 2-step mechanism; a caspase-independent first step and a caspase-dependent second step. In terms of processing, phosphorylated via MAPK-dependent and CDK-dependent pathways during oocyte maturation. Phosphorylation does not appear to affect caspase inhibition or autoubiquitination activity.

The protein resides in the cytoplasm. It carries out the reaction S-ubiquitinyl-[E2 ubiquitin-conjugating enzyme]-L-cysteine + [acceptor protein]-L-lysine = [E2 ubiquitin-conjugating enzyme]-L-cysteine + N(6)-ubiquitinyl-[acceptor protein]-L-lysine.. Weak apoptotic suppressor. Has E3 ubiquitin-protein ligase activity. Weak inhibitor of caspase activity. In Xenopus laevis (African clawed frog), this protein is Baculoviral IAP repeat-containing protein 7-B (birc7-b).